Consider the following 289-residue polypeptide: Rhomboid-type serine protease 2 (289 aa).

6 helical membrane passes run 26 to 46, 67 to 87, 100 to 120, 122 to 142, 157 to 179, and 184 to 203; these read VVIIAIVGFWLAGLQSIVDIQ, FPFIHLNIFHAVMNILALTPL, CLALFFGPLTTIPAFLYIGLE, FVFGNNVAVMGASMWVFLLLG, IGTYSIPTWTTPIGVLFAMAVLV, and FWGHAAGLVIGYGGMFSSTL. S134 (nucleophile) is an active-site residue. H187 is a catalytic residue.

It belongs to the peptidase S54 family.

It localises to the golgi apparatus membrane. Its subcellular location is the golgi apparatus. The protein localises to the cis-Golgi network membrane. It carries out the reaction Cleaves type-1 transmembrane domains using a catalytic dyad composed of serine and histidine that are contributed by different transmembrane domains.. Its function is as follows. Probable rhomboid-type serine protease that catalyzes intramembrane proteolysis. The sequence is that of Rhomboid-type serine protease 2 (RBD2) from Podospora anserina (Pleurage anserina).